The primary structure comprises 125 residues: RxLR effector protein Avh6 (125 aa).

Positions 1-25 (MRLSSTTFVVLAAVLLASGTAVSKA) are cleaved as a signal peptide. Positions 48-70 (RFLRSHHTEDGEAKLSNYDNEER) match the RxLR-dEER motif.

This sequence belongs to the RxLR effector family.

The protein resides in the secreted. It is found in the host cell. In terms of biological role, effector that suppresses plant defense responses during the early stages of pathogen infection. Suppresses cell death induced by effectors and PAMPs in plant hosts. Triggers a hypersensitive response (HR) in the presence of Rps1d. Suppresses BAX-induced cell death and enhan,ced P.capsici infection in Nicotiana benthamiana. Also suppresses effector-triggered immunity induction by associating with Avr1b and Rps1b, suggesting a role in suppressing plant immunity. The chain is RxLR effector protein Avh6 from Phytophthora sojae (strain P6497) (Soybean stem and root rot agent).